A 140-amino-acid polypeptide reads, in one-letter code: Calcitonin (140 aa).

The first 25 residues, 1 to 25, serve as a signal peptide directing secretion; the sequence is MGFWKFSPFLPLSILVLYQVGIIQA. Residues 26 to 81 constitute a propeptide that is removed on maturation; sequence APFRSALESLPDPAVLPEEESRLLLAALVKDYVQMKVRALEQEQETGGASLDSPRA. C84 and C90 form a disulfide bridge. P115 carries the post-translational modification Proline amide. The propeptide occupies 120 to 140; sequence VMARGLERDHGPHIGTSQDAY.

Belongs to the calcitonin family.

The protein localises to the secreted. Functionally, calcitonin is a peptide hormone that causes a rapid but short-lived drop in the level of calcium and phosphate in blood by promoting the incorporation of those ions in the bones. Calcitonin function is mediated by the calcitonin receptor/CALCR and the CALCR-RAMP2 (AMYR2) receptor complex. The chain is Calcitonin (CALCA) from Equus caballus (Horse).